The chain runs to 76 residues: Omega-conotoxin-like TeA61 (76 aa).

An N-terminal signal peptide occupies residues Met1–Ala22. A propeptide spanning residues Asp23 to Arg51 is cleaved from the precursor. Disulfide bonds link Cys52/Cys67, Cys59/Cys70, and Cys66/Cys75.

Belongs to the conotoxin O1 superfamily. In terms of tissue distribution, expressed by the venom duct.

The protein resides in the secreted. In terms of biological role, omega-conotoxins act at presynaptic membranes, they bind and block voltage-gated calcium channels (Cav). This is Omega-conotoxin-like TeA61 from Conus textile (Cloth-of-gold cone).